The primary structure comprises 312 residues: Olfactory receptor 51I2 (312 aa).

At 1–25 (MGLFNVTHPAFFLLTGIPGLESSHS) the chain is on the extracellular side. N-linked (GlcNAc...) asparagine glycosylation occurs at Asn5. A helical transmembrane segment spans residues 26 to 46 (WLSGPLCVMYAVALGGNTVIL). At 47–54 (QAVRVEPS) the chain is on the cytoplasmic side. The helical transmembrane segment at 55 to 75 (LHEPMYYFLSMLSFSDVAISM) threads the bilayer. The Extracellular segment spans residues 76-99 (ATLPTVLRTFCLNARNITFDACLI). Cys97 and Cys189 are disulfide-bonded. A helical transmembrane segment spans residues 100–120 (QMFLIHFFSMMESGILLAMSF). Residues 121–139 (DRYVAICDPLRYATVLTTE) are Cytoplasmic-facing. Residues 140–160 (VIAAMGLGAAARSFITLFPLP) traverse the membrane as a helical segment. The Extracellular segment spans residues 161–196 (FLIKRLPICRSNVLSHSYCLHPDMMRLACADISINS). Residues 197–217 (IYGLFVLVSTFGMDLFFIFLS) traverse the membrane as a helical segment. The Cytoplasmic segment spans residues 218–237 (YVLILRSVMATASREERLKA). A helical membrane pass occupies residues 238 to 258 (LNTCVSHILAVLAFYVPMIGV). Over 259-273 (STVHRFGKHVPCYIH) the chain is Extracellular. Residues 274-294 (VLMSNVYLFVPPVLNPLIYSA) form a helical membrane-spanning segment. Residues 295 to 312 (KTKEIRRAIFRMFHHIKI) are Cytoplasmic-facing.

It belongs to the G-protein coupled receptor 1 family.

Its subcellular location is the cell membrane. In terms of biological role, odorant receptor. The chain is Olfactory receptor 51I2 (OR51I2) from Homo sapiens (Human).